A 430-amino-acid polypeptide reads, in one-letter code: Asparagine--tRNA ligase (430 aa).

It belongs to the class-II aminoacyl-tRNA synthetase family.

Its subcellular location is the cytoplasm. The enzyme catalyses tRNA(Asn) + L-asparagine + ATP = L-asparaginyl-tRNA(Asn) + AMP + diphosphate + H(+). In Thermococcus gammatolerans (strain DSM 15229 / JCM 11827 / EJ3), this protein is Asparagine--tRNA ligase.